Here is a 642-residue protein sequence, read N- to C-terminus: Threonine--tRNA ligase (642 aa).

One can recognise a TGS domain in the interval 1–61; it reads MPIITLPDGS…STDSDLSIIT (61 aa). The tract at residues 243-534 is catalytic; it reads DHRKIGKQLD…LIEEYAGKFP (292 aa). Zn(2+) is bound by residues Cys-334, His-385, and His-511.

Belongs to the class-II aminoacyl-tRNA synthetase family. As to quaternary structure, homodimer. It depends on Zn(2+) as a cofactor.

Its subcellular location is the cytoplasm. It catalyses the reaction tRNA(Thr) + L-threonine + ATP = L-threonyl-tRNA(Thr) + AMP + diphosphate + H(+). In terms of biological role, catalyzes the attachment of threonine to tRNA(Thr) in a two-step reaction: L-threonine is first activated by ATP to form Thr-AMP and then transferred to the acceptor end of tRNA(Thr). Also edits incorrectly charged L-seryl-tRNA(Thr). The polypeptide is Threonine--tRNA ligase (Shewanella denitrificans (strain OS217 / ATCC BAA-1090 / DSM 15013)).